A 1020-amino-acid polypeptide reads, in one-letter code: Sodium/potassium-transporting ATPase subunit alpha-2 (1020 aa).

Positions 1 to 5 are excised as a propeptide; that stretch reads MGRGA. The interval 1–31 is disordered; sequence MGRGAGREYSPAATTAENGGGKKKQKEKELD. The Cytoplasmic segment spans residues 6-85; sequence GREYSPAATT…NALTPPPTTP (80 aa). S10 carries the phosphoserine modification. Positions 80–82 are interaction with phosphoinositide-3 kinase; the sequence is PPP. Residues 86–106 form a helical membrane-spanning segment; the sequence is EWVKFCRQLFGGFSILLWIGA. The Extracellular portion of the chain corresponds to 107–129; that stretch reads ILCFLAYGIQAAMEDEPSNDNLY. Residues 130-150 traverse the membrane as a helical segment; the sequence is LGVVLAAVVIVTGCFSYYQEA. The Cytoplasmic segment spans residues 151-286; the sequence is KSSKIMDSFK…VGRTPIAMEI (136 aa). A compositionally biased stretch (polar residues) spans 212–227; sequence DNSSLTGESEPQTRSP. The disordered stretch occupies residues 212 to 231; that stretch reads DNSSLTGESEPQTRSPEFTH. The chain crosses the membrane as a helical span at residues 287–306; that stretch reads EHFIQLITGVAVFLGVSFFV. Residues 307–318 lie on the Extracellular side of the membrane; that stretch reads LSLILGYSWLEA. The helical transmembrane segment at 319 to 336 threads the bilayer; the sequence is VIFLIGIIVANVPEGLLA. The Cytoplasmic segment spans residues 337 to 769; the sequence is TVTVCLTLTA…EEGRLIFDNL (433 aa). Residue D374 is the 4-aspartylphosphate intermediate of the active site. Phosphoserine occurs at positions 439, 450, 496, and 559. A Phosphothreonine modification is found at T570. A phosphoserine mark is found at S587 and S672. D714 and D718 together coordinate Mg(2+). A helical membrane pass occupies residues 770–789; that stretch reads KKSIAYTLTSNIPEITPFLL. At 790-799 the chain is on the extracellular side; that stretch reads FIIANIPLPL. The helical transmembrane segment at 800-820 threads the bilayer; that stretch reads GTVTILCIDLGTDMVPAISLA. Residues 821-840 are Cytoplasmic-facing; the sequence is YEAAESDIMKRQPRNSQTDK. The residue at position 826 (S826) is a Phosphoserine. Residues 841–863 form a helical membrane-spanning segment; it reads LVNERLISMAYGQIGMIQALGGF. The Extracellular segment spans residues 864–915; the sequence is FTYFVILAENGFLPSRLLGIRLDWDDRTMNDLEDSYGQEWTYEQRKVVEFTC. Residues 916-935 form a helical membrane-spanning segment; sequence HTAFFASIVVVQWADLIICK. The Cytoplasmic portion of the chain corresponds to 936-948; the sequence is TRRNSVFQQGMKN. Phosphoserine; by PKA is present on S940. Residues 949-967 traverse the membrane as a helical segment; it reads KILIFGLLEETALAAFLSY. Over 968–982 the chain is Extracellular; that stretch reads CPGMGVALRMYPLKV. A helical membrane pass occupies residues 983–1003; that stretch reads TWWFCAFPYSLLIFIYDEVRK. At 1004 to 1020 the chain is on the cytoplasmic side; the sequence is LILRRYPGGWVEKETYY.

It belongs to the cation transport ATPase (P-type) (TC 3.A.3) family. Type IIC subfamily. In terms of assembly, the sodium/potassium-transporting ATPase is composed of a catalytic alpha subunit, an auxiliary non-catalytic beta subunit and an additional regulatory subunit. Interacts with regulatory subunit FXYD1.

Its subcellular location is the membrane. It is found in the cell membrane. The enzyme catalyses K(+)(out) + Na(+)(in) + ATP + H2O = K(+)(in) + Na(+)(out) + ADP + phosphate + H(+). This is the catalytic component of the active enzyme, which catalyzes the hydrolysis of ATP coupled with the exchange of sodium and potassium ions across the plasma membrane. This action creates the electrochemical gradient of sodium and potassium, providing the energy for active transport of various nutrients. In Homo sapiens (Human), this protein is Sodium/potassium-transporting ATPase subunit alpha-2 (ATP1A2).